The primary structure comprises 372 residues: MFAESPIKRRKSTRINVGNVPIGDGAPIAVQSMTNTRTTDVAATVDQINRIVAVGGEIVRVSVPTMEAAEAFKEIKKQVSVPLVADIHFDYRIALKVAEYGVDCLRINPGNIGNMERVRSVVDCAKDKNIPIRIGVNGGSLEKDLQEKYGEPTPEALVESAMRHVDILDKLNFDQFKVSVKASDVFLAVGAYRLLAQKIDQPLHLGITEAGGQRAGAVKSAVGLGMLLAEGIGDTVRVSLAADPVEEIKVGFDILKSLRIRSRGINFIACPSCSRQEFDVIGTVNALEQRLEDILTPMDVSIIGCVVNGPGEAEVSDLGLTGARNMSGLYEDGKRVKERLPNDDLVDKLEAKIRAKAARLSEQNKIQVSVKD.

[4Fe-4S] cluster contacts are provided by Cys270, Cys273, Cys305, and Glu312.

This sequence belongs to the IspG family. [4Fe-4S] cluster serves as cofactor.

It catalyses the reaction (2E)-4-hydroxy-3-methylbut-2-enyl diphosphate + oxidized [flavodoxin] + H2O + 2 H(+) = 2-C-methyl-D-erythritol 2,4-cyclic diphosphate + reduced [flavodoxin]. The protein operates within isoprenoid biosynthesis; isopentenyl diphosphate biosynthesis via DXP pathway; isopentenyl diphosphate from 1-deoxy-D-xylulose 5-phosphate: step 5/6. In terms of biological role, converts 2C-methyl-D-erythritol 2,4-cyclodiphosphate (ME-2,4cPP) into 1-hydroxy-2-methyl-2-(E)-butenyl 4-diphosphate. This chain is 4-hydroxy-3-methylbut-2-en-1-yl diphosphate synthase (flavodoxin), found in Alteromonas mediterranea (strain DSM 17117 / CIP 110805 / LMG 28347 / Deep ecotype).